The sequence spans 111 residues: Small ribosomal subunit protein bS16 (111 aa).

This sequence belongs to the bacterial ribosomal protein bS16 family.

In Rickettsia typhi (strain ATCC VR-144 / Wilmington), this protein is Small ribosomal subunit protein bS16.